Here is a 908-residue protein sequence, read N- to C-terminus: Protein translocase subunit SecA (908 aa).

ATP-binding positions include Q87, 105–109 (GEGKT), and D512. The segment at 876–908 (QAPMIRDGEKVGRNDPCPCGSGRKYKQCHGKLS) is disordered. C892, C894, C903, and H904 together coordinate Zn(2+). A compositionally biased stretch (basic residues) spans 898–908 (RKYKQCHGKLS).

Belongs to the SecA family. In terms of assembly, monomer and homodimer. Part of the essential Sec protein translocation apparatus which comprises SecA, SecYEG and auxiliary proteins SecDF-YajC and YidC. The cofactor is Zn(2+).

It localises to the cell inner membrane. Its subcellular location is the cytoplasm. The catalysed reaction is ATP + H2O + cellular proteinSide 1 = ADP + phosphate + cellular proteinSide 2.. Functionally, part of the Sec protein translocase complex. Interacts with the SecYEG preprotein conducting channel. Has a central role in coupling the hydrolysis of ATP to the transfer of proteins into and across the cell membrane, serving both as a receptor for the preprotein-SecB complex and as an ATP-driven molecular motor driving the stepwise translocation of polypeptide chains across the membrane. This chain is Protein translocase subunit SecA, found in Shewanella baltica (strain OS185).